The following is a 319-amino-acid chain: MATH domain and coiled-coil domain-containing protein At3g58200 (319 aa).

The region spanning 6–132 (DNKFRWVIKN…NEEVKIVVEV (127 aa)) is the MATH domain. Positions 255–302 (FKVDWLEKKLEEVKEKKKEEQIGETRMQEMKVFKQKCSDIEALMEREK) form a coiled coil.

In Arabidopsis thaliana (Mouse-ear cress), this protein is MATH domain and coiled-coil domain-containing protein At3g58200.